We begin with the raw amino-acid sequence, 87 residues long: Small ribosomal subunit protein uS15 (87 aa).

The protein belongs to the universal ribosomal protein uS15 family. Part of the 30S ribosomal subunit. Forms a bridge to the 50S subunit in the 70S ribosome, contacting the 23S rRNA.

Its function is as follows. One of the primary rRNA binding proteins, it binds directly to 16S rRNA where it helps nucleate assembly of the platform of the 30S subunit by binding and bridging several RNA helices of the 16S rRNA. Functionally, forms an intersubunit bridge (bridge B4) with the 23S rRNA of the 50S subunit in the ribosome. This chain is Small ribosomal subunit protein uS15, found in Alkaliphilus metalliredigens (strain QYMF).